We begin with the raw amino-acid sequence, 677 residues long: MADTCFRLHTEFEPTGDQPEAIGQIVANLGHGVRDQVLLGVTGSGKTFTVANVIAACNRPALILAPNKTLAAQLYNEFRALFPDNAVEYFVSYYDYYQPEAYVPASDTYIEKDSSINDNIDKLRHAATHALLTRRDVVIVASVSCIYGLGSPEYYARLVIPVECGQRFSMDALMTRLVEVQYQRNDFDFHRGTFRVRGDVLEVIPAYHHERALRIEFFGDDIDAISEIDPLTGEVLGSVGKTVIYPASHYVSDRDNLVRAMSDIRDELGERLREYQSANRLVEAQRLEQRTMLDLEMMEELGYCNGIENYSRHLDGRAAGQPPSCLLDYFPDDFLLFVDESHITVPQVGAMYKGDRSRKSTLVDFGFRLPSALDNRPLEFAEFLTRINQTVYVSATPGKWELDRSQGVIAEQIIRPTGLVDPVVEVRPTRGQVDDLLAECRARAARDERVLITTLTKRMAEDLTEHLGNMGLSVRYLHSDIDTMERMAIIQALRRGECDVLVGINLLREGLDIPEVSLVSILDADKEGFLRSTGSLIQTFGRAARNAAGRVILYADTVTASMRAAMDETARRRERQQAWNEANGIEPRTIRKSLDTPFDAIYSAASEGGKGKGRGRGRQAAPAVENVAEYGTSPEDMAKHIQKLEREMREAAKELEFERAATLRDRIRLLRERLIEA.

Residues 27-414 (ANLGHGVRDQ…SQGVIAEQII (388 aa)) form the Helicase ATP-binding domain. An ATP-binding site is contributed by 40 to 47 (GVTGSGKT). Residues 93–116 (YYDYYQPEAYVPASDTYIEKDSSI) carry the Beta-hairpin motif. In terms of domain architecture, Helicase C-terminal spans 432 to 594 (QVDDLLAECR…IEPRTIRKSL (163 aa)). Residues 638-673 (AKHIQKLEREMREAAKELEFERAATLRDRIRLLRER) enclose the UVR domain.

Belongs to the UvrB family. In terms of assembly, forms a heterotetramer with UvrA during the search for lesions. Interacts with UvrC in an incision complex.

Its subcellular location is the cytoplasm. The UvrABC repair system catalyzes the recognition and processing of DNA lesions. A damage recognition complex composed of 2 UvrA and 2 UvrB subunits scans DNA for abnormalities. Upon binding of the UvrA(2)B(2) complex to a putative damaged site, the DNA wraps around one UvrB monomer. DNA wrap is dependent on ATP binding by UvrB and probably causes local melting of the DNA helix, facilitating insertion of UvrB beta-hairpin between the DNA strands. Then UvrB probes one DNA strand for the presence of a lesion. If a lesion is found the UvrA subunits dissociate and the UvrB-DNA preincision complex is formed. This complex is subsequently bound by UvrC and the second UvrB is released. If no lesion is found, the DNA wraps around the other UvrB subunit that will check the other stand for damage. This is UvrABC system protein B from Nitratidesulfovibrio vulgaris (strain ATCC 29579 / DSM 644 / CCUG 34227 / NCIMB 8303 / VKM B-1760 / Hildenborough) (Desulfovibrio vulgaris).